Here is an 864-residue protein sequence, read N- to C-terminus: Structure-specific endonuclease subunit SLX4 (864 aa).

Residues 35–54 (SPLSLPSPTSLLDFLSTSTS) show a composition bias toward low complexity. Disordered regions lie at residues 35 to 72 (SPLSLPSPTSLLDFLSTSTSRGPARSDTDGDKTQGKEV), 89 to 113 (VVSGTGGKAATGKKLKRRTESPGNA), 160 to 193 (KANQTVSLQPETKKSAPKGCNDTTQPAENGHIND), 288 to 318 (GLSDSRQSSITEDSESATSKPRRVKAKNPPK), 348 to 382 (LSDEPGKEKNVAKRTSGARYAKPGRKKSATTEKKN), 413 to 432 (ANGHSEDQHEQNEGTSHISN), and 625 to 771 (KTSN…ETLP). Positions 58 to 72 (ARSDTDGDKTQGKEV) are enriched in basic and acidic residues. 2 stretches are compositionally biased toward polar residues: residues 160 to 169 (KANQTVSLQP) and 289 to 306 (LSDSRQSSITEDSESATS). A compositionally biased stretch (basic residues) spans 307 to 317 (KPRRVKAKNPP). Residues 659 to 668 (SIPQTATTQV) are compositionally biased toward polar residues. Residues 683-695 (VPVPSRRSTSTSK) are compositionally biased toward low complexity. Residues 743 to 771 (PESFNLPTTPLTIRSGKIPSTGTASETLP) are compositionally biased toward polar residues.

The protein belongs to the SLX4 family. As to quaternary structure, forms a heterodimer with SLX1. Post-translationally, phosphorylated in response to DNA damage.

The protein localises to the nucleus. In terms of biological role, regulatory subunit of the SLX1-SLX4 structure-specific endonuclease that resolves DNA secondary structures generated during DNA repair and recombination. Has endonuclease activity towards branched DNA substrates, introducing single-strand cuts in duplex DNA close to junctions with ss-DNA. This is Structure-specific endonuclease subunit SLX4 from Paracoccidioides brasiliensis (strain Pb03).